The chain runs to 830 residues: Leucine--tRNA ligase (830 aa).

The 'HIGH' region signature appears at 34 to 44 (PYPSGNIHMGH). The 'KMSKS' region signature appears at 592–596 (KMSKS). Residue K595 participates in ATP binding.

Belongs to the class-I aminoacyl-tRNA synthetase family.

It is found in the cytoplasm. It carries out the reaction tRNA(Leu) + L-leucine + ATP = L-leucyl-tRNA(Leu) + AMP + diphosphate. The polypeptide is Leucine--tRNA ligase (Ehrlichia ruminantium (strain Gardel)).